The primary structure comprises 208 residues: Ribosomal RNA large subunit methyltransferase E (208 aa).

Residues Gly-63, Trp-65, Asp-83, Asp-99, and Asp-124 each coordinate S-adenosyl-L-methionine. Catalysis depends on Lys-164, which acts as the Proton acceptor.

The protein belongs to the class I-like SAM-binding methyltransferase superfamily. RNA methyltransferase RlmE family.

Its subcellular location is the cytoplasm. It carries out the reaction uridine(2552) in 23S rRNA + S-adenosyl-L-methionine = 2'-O-methyluridine(2552) in 23S rRNA + S-adenosyl-L-homocysteine + H(+). Specifically methylates the uridine in position 2552 of 23S rRNA at the 2'-O position of the ribose in the fully assembled 50S ribosomal subunit. This chain is Ribosomal RNA large subunit methyltransferase E, found in Salmonella choleraesuis (strain SC-B67).